A 297-amino-acid polypeptide reads, in one-letter code: 4-hydroxy-tetrahydrodipicolinate synthase (297 aa).

Threonine 47 is a binding site for pyruvate. The Proton donor/acceptor role is filled by tyrosine 136. Lysine 165 acts as the Schiff-base intermediate with substrate in catalysis. Residue isoleucine 206 participates in pyruvate binding.

This sequence belongs to the DapA family. Homotetramer; dimer of dimers.

It localises to the cytoplasm. The catalysed reaction is L-aspartate 4-semialdehyde + pyruvate = (2S,4S)-4-hydroxy-2,3,4,5-tetrahydrodipicolinate + H2O + H(+). It participates in amino-acid biosynthesis; L-lysine biosynthesis via DAP pathway; (S)-tetrahydrodipicolinate from L-aspartate: step 3/4. Its function is as follows. Catalyzes the condensation of (S)-aspartate-beta-semialdehyde [(S)-ASA] and pyruvate to 4-hydroxy-tetrahydrodipicolinate (HTPA). The chain is 4-hydroxy-tetrahydrodipicolinate synthase from Campylobacter concisus (strain 13826).